A 62-amino-acid chain; its full sequence is Dual specificity mitogen-activated protein kinase kinase 3 (62 aa).

One can recognise a Protein kinase domain in the interval 1 to 62 (GKIAVSIVKA…VAKTMDAGCK (62 aa)).

Belongs to the protein kinase superfamily. STE Ser/Thr protein kinase family. MAP kinase kinase subfamily. Activated by phosphorylation on Ser/Thr catalyzed by MAP kinase kinase kinases.

The catalysed reaction is L-seryl-[protein] + ATP = O-phospho-L-seryl-[protein] + ADP + H(+). It carries out the reaction L-threonyl-[protein] + ATP = O-phospho-L-threonyl-[protein] + ADP + H(+). It catalyses the reaction L-tyrosyl-[protein] + ATP = O-phospho-L-tyrosyl-[protein] + ADP + H(+). In terms of biological role, catalyzes the concomitant phosphorylation of a threonine and a tyrosine residue in a Thr-Glu-Tyr sequence located in MAP kinases. The chain is Dual specificity mitogen-activated protein kinase kinase 3 (map2k3) from Xenopus laevis (African clawed frog).